A 209-amino-acid chain; its full sequence is Uracil phosphoribosyltransferase (209 aa).

5-phospho-alpha-D-ribose 1-diphosphate-binding positions include Arg-79, Arg-104, and 131-139; that span reads DPMLATGGS. Uracil-binding positions include Ile-194 and 199 to 201; that span reads GDA. Asp-200 serves as a coordination point for 5-phospho-alpha-D-ribose 1-diphosphate.

It belongs to the UPRTase family. Mg(2+) serves as cofactor.

It carries out the reaction UMP + diphosphate = 5-phospho-alpha-D-ribose 1-diphosphate + uracil. The protein operates within pyrimidine metabolism; UMP biosynthesis via salvage pathway; UMP from uracil: step 1/1. Its activity is regulated as follows. Allosterically activated by GTP. Catalyzes the conversion of uracil and 5-phospho-alpha-D-ribose 1-diphosphate (PRPP) to UMP and diphosphate. The sequence is that of Uracil phosphoribosyltransferase from Geobacillus sp. (strain WCH70).